A 406-amino-acid chain; its full sequence is Tryptophan synthase beta chain (406 aa).

Lysine 99 carries the N6-(pyridoxal phosphate)lysine modification.

It belongs to the TrpB family. As to quaternary structure, tetramer of two alpha and two beta chains. The cofactor is pyridoxal 5'-phosphate.

It carries out the reaction (1S,2R)-1-C-(indol-3-yl)glycerol 3-phosphate + L-serine = D-glyceraldehyde 3-phosphate + L-tryptophan + H2O. Its pathway is amino-acid biosynthesis; L-tryptophan biosynthesis; L-tryptophan from chorismate: step 5/5. In terms of biological role, the beta subunit is responsible for the synthesis of L-tryptophan from indole and L-serine. The polypeptide is Tryptophan synthase beta chain (Brucella abortus (strain 2308)).